The following is a 164-amino-acid chain: MEIPVSVQPSWLRRASAPLPGLSAPGRLFDQRFGEGLLEAELAALCPAALAPYYLRAPSVALPTAQVSTDPGHFSVLLDVKHFSPEEIAVKVVGDHVEVHARHEERPDEHGYIAREFHRRYRLPPGVDPAAVTSALSPEGVLSIQAAPAPAQAPLQSPPGAAAK.

The segment at 1-72 (MEIPVSVQPS…PTAQVSTDPG (72 aa)) is involved in stabilization of the HSPB1:HSBP6 heterodimer. Serine 16 carries the phosphoserine modification. One can recognise a sHSP domain in the interval 56–163 (RAPSVALPTA…PLQSPPGAAA (108 aa)). Glutamine 66 bears the Deamidated glutamine mark. At serine 157 the chain carries Phosphoserine.

The protein belongs to the small heat shock protein (HSP20) family. As to quaternary structure, homodimer. Small heat shock proteins form high molecular mass oligomers containing variable number of monomers; these oligomers display a very flexible quaternary structure easily exchanging their subunits. Heterooligomer with HSPB1; formed through oligomerization of HSPB1:HSBP6 dimers; subunit exchange leads to formation of at least two different heterooligomeric complexes, differing in variable quantities of HSPB1 and HSPB6 homodimers in addition to HSPB1:HSPB6 heterodimers. Heterooligomer with CRYAB; large heterooligomers consist of CRYAB homodimers and HSPB5:HSPB6 heterodimers but lacking HSPB6 homodimers. Interacts with BAG3. Interacts (phosphorylated) with YWHAZ. Interacts with PDE4A and PDE4D; required for maintenance of the non-phosphorylated state of HSPB6 under basal conditions. Interacts with KDR. Interacts with PRKD1. Phosphorylated at Ser-16 by PKA and probably PKD1K; required to protect cardiomyocytes from apoptosis.

The protein resides in the cytoplasm. It localises to the nucleus. The protein localises to the secreted. Its function is as follows. Small heat shock protein which functions as a molecular chaperone probably maintaining denatured proteins in a folding-competent state. Seems to have versatile functions in various biological processes. Plays a role in regulating muscle function such as smooth muscle vasorelaxation and cardiac myocyte contractility. May regulate myocardial angiogenesis implicating KDR. Overexpression mediates cardioprotection and angiogenesis after induced damage. Stabilizes monomeric YWHAZ thereby supporting YWHAZ chaperone-like activity. In Bos taurus (Bovine), this protein is Heat shock protein beta-6 (HSPB6).